The following is a 410-amino-acid chain: Acyl-CoA-binding domain-containing protein 5-B (410 aa).

In terms of domain architecture, ACB spans 12–101; that stretch reads AQKRFEAAVK…IQLIIETLPV (90 aa). An acyl-CoA contacts are provided by residues 23–32, 43–47, Lys-69, and Tyr-88; these read IRSLPEDGSY and YSYYK. Residues 119–128 show a composition bias toward acidic residues; that stretch reads VEDDDDDDDE. Disordered regions lie at residues 119 to 165, 221 to 242, and 254 to 320; these read VEDD…LDDY, SDDEMDSDSMDKPATPEKGSGV, and GANM…DRMD. Residues 326–355 are a coiled coil; it reads TQITTILSELEDNMQDVLRRLTTLEQLTAS. A transmembrane span lies at residues 382-404; the sequence is SPFTAVLTVLWPFAVHWLVQFYL.

Its subcellular location is the membrane. Functionally, binds medium- and long-chain acyl-CoA esters. The polypeptide is Acyl-CoA-binding domain-containing protein 5-B (acbd5b) (Danio rerio (Zebrafish)).